Consider the following 181-residue polypeptide: Bifunctional protein PyrR (181 aa).

The PRPP-binding signature appears at 101 to 113; that stretch reads VILVDDVLFTGRT.

Belongs to the purine/pyrimidine phosphoribosyltransferase family. PyrR subfamily.

It catalyses the reaction UMP + diphosphate = 5-phospho-alpha-D-ribose 1-diphosphate + uracil. Its function is as follows. Regulates the transcription of the pyrimidine nucleotide (pyr) operon in response to exogenous pyrimidines. In terms of biological role, also displays a weak uracil phosphoribosyltransferase activity which is not physiologically significant. The protein is Bifunctional protein PyrR of Desulfosudis oleivorans (strain DSM 6200 / JCM 39069 / Hxd3) (Desulfococcus oleovorans).